The following is an 84-amino-acid chain: Beta-cardiotoxin CTX14 (84 aa).

Positions 1–21 (MKTLLLTLVVVTIVCLDLGYT) are cleaved as a signal peptide. 4 disulfide bridges follow: Cys24–Cys43, Cys36–Cys61, Cys65–Cys76, and Cys77–Cys82.

Belongs to the three-finger toxin family. Short-chain subfamily. Aminergic toxin sub-subfamily. In terms of tissue distribution, expressed by the venom gland.

It is found in the secreted. Acts as a beta-blocker by binding to beta-1 and beta-2 adrenergic receptors (ADRB1 and ADRB2). It dose-dependently decreases the heart rate (bradycardia), whereas conventional cardiotoxins increases it. At 100 mg/kg, intraperitoneal injection into mice provokes labored breathing, impaired locomotion, lack of response to external stimuli, and death (after 30 minutes). The chain is Beta-cardiotoxin CTX14 from Ophiophagus hannah (King cobra).